A 98-amino-acid polypeptide reads, in one-letter code: HssA/B-like protein 33 (98 aa).

Disordered stretches follow at residues 1 to 29 (MTLF…SGTS) and 60 to 98 (AKSS…SCSC). The span at 60-72 (AKSSGGSCGGKGG) shows a compositional bias: gly residues. Positions 73 to 88 (PHNHGHGNGHGPHGHG) are enriched in basic residues. Residues 89–98 (GKGSGGSCSC) show a composition bias toward gly residues.

It belongs to the hssA/B family.

The polypeptide is HssA/B-like protein 33 (hssl33) (Dictyostelium discoideum (Social amoeba)).